The following is a 177-amino-acid chain: GTP-dependent dephospho-CoA kinase (177 aa).

Residues D45, V46, V47, D64, and E120 each contribute to the GTP site.

Belongs to the GTP-dependent DPCK family.

It catalyses the reaction 3'-dephospho-CoA + GTP = GDP + CoA + H(+). It functions in the pathway cofactor biosynthesis; coenzyme A biosynthesis. Its function is as follows. Catalyzes the GTP-dependent phosphorylation of the 3'-hydroxyl group of dephosphocoenzyme A to form coenzyme A (CoA). In Halobacterium salinarum (strain ATCC 29341 / DSM 671 / R1), this protein is GTP-dependent dephospho-CoA kinase.